The sequence spans 206 residues: Small ribosomal subunit protein uS4 (206 aa).

The region spanning 96–159 (TRLDNVVYRM…KKQARISASL (64 aa)) is the S4 RNA-binding domain.

This sequence belongs to the universal ribosomal protein uS4 family. In terms of assembly, part of the 30S ribosomal subunit. Contacts protein S5. The interaction surface between S4 and S5 is involved in control of translational fidelity.

Its function is as follows. One of the primary rRNA binding proteins, it binds directly to 16S rRNA where it nucleates assembly of the body of the 30S subunit. In terms of biological role, with S5 and S12 plays an important role in translational accuracy. The polypeptide is Small ribosomal subunit protein uS4 (Shewanella violacea).